Reading from the N-terminus, the 337-residue chain is MKIAVRGGHNFKAKGALGIIDETIENRKVYKALIKYLNIAGHNVIDVTPGECDVNTDLYLGVQKAEDNNSELFLSIHFDKAYDRYEGALGTGTWIYGRGGKAEIYAKRIVDNLSKGTGLKNRGVKENSKLYELRKTSMPAVLVEVCFCEATEDVRIYREKGPDLIGKLIAEAINEKEIEENIKPEGQEDSLKEKFLKSTNTKAIANLDPRDNPSSIYKDLGEIYKGERIRVLPEICDNKDYLPIIYWKDTTNIESQKVWVSAKQNYLKIDTNATVINVVTELDARYIKSQRSSKMGYVKNGERLYVHKIESGYALGTYFASNGYKTAWFTAKYISLD.

One can recognise a MurNAc-LAA domain in the interval I3–N174.

This sequence to C.perfringens pIP404 ORF10.

This is an uncharacterized protein from Clostridium perfringens (strain 13 / Type A).